A 274-amino-acid chain; its full sequence is Hydroxyethylthiazole kinase (274 aa).

Met50 is a binding site for substrate. ATP contacts are provided by Arg126 and Ser171. Substrate is bound at residue Ala200.

It belongs to the Thz kinase family. It depends on Mg(2+) as a cofactor.

It catalyses the reaction 5-(2-hydroxyethyl)-4-methylthiazole + ATP = 4-methyl-5-(2-phosphooxyethyl)-thiazole + ADP + H(+). Its pathway is cofactor biosynthesis; thiamine diphosphate biosynthesis; 4-methyl-5-(2-phosphoethyl)-thiazole from 5-(2-hydroxyethyl)-4-methylthiazole: step 1/1. Its function is as follows. Catalyzes the phosphorylation of the hydroxyl group of 4-methyl-5-beta-hydroxyethylthiazole (THZ). The chain is Hydroxyethylthiazole kinase from Acinetobacter baylyi (strain ATCC 33305 / BD413 / ADP1).